Here is a 223-residue protein sequence, read N- to C-terminus: Ras-related protein Rab-32 (223 aa).

Ala-2 is modified (N-acetylalanine). Residues Val-34, Gly-35, Lys-36, Thr-37, Ser-38, Ser-49, Gln-50, Tyr-52, and Thr-55 each coordinate GTP. Residue Thr-37 participates in Mg(2+) binding. A Switch 1 motif is present at residues Gln-46–Phe-60. Thr-55 is a Mg(2+) binding site. Ser-69 bears the Phosphoserine mark. Asp-79 contacts Mg(2+). GTP is bound by residues Gly-82, Asn-141, Lys-142, Asp-144, Ala-173, and Lys-174. Residues Gly-82 to Lys-95 carry the Switch 2 motif. The interval Asn-176 to Gln-195 is PKA-RII subunit binding domain. S-geranylgeranyl cysteine attachment occurs at residues Cys-222 and Cys-223.

It belongs to the small GTPase superfamily. Rab family. As to quaternary structure, interacts with ANKRD27. A decreased interaction with ANKRD27 seen in the presence of SGSM2. Interacts with LRRK2 (via N-terminus); this interaction results in stimulation of RAB10 phosphorylation by LRRK2. The cofactor is Mg(2+). As to expression, widely expressed with highest levels in liver. Strong expression also found in melanocyte, platelet, mast cell and fibroblast cell lines.

It is found in the mitochondrion. The protein resides in the mitochondrion outer membrane. Its subcellular location is the cytoplasmic vesicle. The protein localises to the phagosome. It localises to the phagosome membrane. It is found in the melanosome. The protein resides in the melanosome membrane. The catalysed reaction is GTP + H2O = GDP + phosphate + H(+). With respect to regulation, regulated by guanine the nucleotide exchange factor (GEF) BLOC-3 complex composed of HPS1 and HPS4 which promote the exchange of bound GDP for free GTP. Regulated by the GTPase activating protein (GAP) SGSM2/RUTBC1 which increases the GTP hydrolysis activity. Inhibited by GDP dissociation inhibitors (GDIs) which prevent Rab-GDP dissociation. The small GTPases Rab are key regulators of intracellular membrane trafficking, from the formation of transport vesicles to their fusion with membranes. Rabs cycle between an inactive GDP-bound form and an active GTP-bound form that is able to recruit to membranes different set of downstream effectors directly responsible for vesicle formation, movement, tethering and fusion. Also acts as an A-kinase anchoring protein by binding to the type II regulatory subunit of protein kinase A and anchoring it to the mitochondrion. Also involved in synchronization of mitochondrial fission. Plays a role in the maturation of phagosomes that engulf pathogens, such as S.aureus and M.tuberculosis. Plays an important role in the control of melanin production and melanosome biogenesis. In concert with RAB38, regulates the proper trafficking of melanogenic enzymes TYR, TYRP1 and DCT/TYRP2 to melanosomes in melanocytes. Stimulates phosphorylation of RAB10 'Thr-73' by LRRK2. The polypeptide is Ras-related protein Rab-32 (Mus musculus (Mouse)).